The sequence spans 174 residues: NADH-ubiquinone oxidoreductase chain 6 (174 aa).

6 helical membrane passes run 1-21, 24-44, 47-67, 86-106, 111-131, and 151-171; these read MTYA…GFSS, SPIY…AVIL, GGGY…MVVF, AEVL…VLWV, GVVV…EGEG, and WLVV…IEIA.

Belongs to the complex I subunit 6 family. As to quaternary structure, core subunit of respiratory chain NADH dehydrogenase (Complex I) which is composed of 45 different subunits.

Its subcellular location is the mitochondrion inner membrane. The catalysed reaction is a ubiquinone + NADH + 5 H(+)(in) = a ubiquinol + NAD(+) + 4 H(+)(out). Its function is as follows. Core subunit of the mitochondrial membrane respiratory chain NADH dehydrogenase (Complex I) which catalyzes electron transfer from NADH through the respiratory chain, using ubiquinone as an electron acceptor. Essential for the catalytic activity and assembly of complex I. This chain is NADH-ubiquinone oxidoreductase chain 6 (MT-ND6), found in Pongo pygmaeus (Bornean orangutan).